Reading from the N-terminus, the 637-residue chain is DNA gyrase subunit B (637 aa).

The region spanning 420–534 is the Toprim domain; it reads CEIYIVEGDS…EGHVFIAQPP (115 aa). Residues Glu-426, Asp-499, and Asp-501 each contribute to the Mg(2+) site.

The protein belongs to the type II topoisomerase GyrB family. Heterotetramer, composed of two GyrA and two GyrB chains. In the heterotetramer, GyrA contains the active site tyrosine that forms a transient covalent intermediate with DNA, while GyrB binds cofactors and catalyzes ATP hydrolysis. The cofactor is Mg(2+). Mn(2+) serves as cofactor. It depends on Ca(2+) as a cofactor.

It is found in the cytoplasm. It catalyses the reaction ATP-dependent breakage, passage and rejoining of double-stranded DNA.. Functionally, a type II topoisomerase that negatively supercoils closed circular double-stranded (ds) DNA in an ATP-dependent manner to modulate DNA topology and maintain chromosomes in an underwound state. Negative supercoiling favors strand separation, and DNA replication, transcription, recombination and repair, all of which involve strand separation. Also able to catalyze the interconversion of other topological isomers of dsDNA rings, including catenanes and knotted rings. Type II topoisomerases break and join 2 DNA strands simultaneously in an ATP-dependent manner. This is DNA gyrase subunit B from Clostridium acetobutylicum (strain ATCC 824 / DSM 792 / JCM 1419 / IAM 19013 / LMG 5710 / NBRC 13948 / NRRL B-527 / VKM B-1787 / 2291 / W).